Here is a 97-residue protein sequence, read N- to C-terminus: Large ribosomal subunit protein bL27 (97 aa).

The propeptide occupies 1–12 (MLKMNLANLQLF). Positions 14 to 37 (HKKGGGSTSNGRDSQAKRLGAKAA) are disordered.

It belongs to the bacterial ribosomal protein bL27 family. The N-terminus is cleaved by ribosomal processing cysteine protease Prp.

This Streptococcus gordonii (strain Challis / ATCC 35105 / BCRC 15272 / CH1 / DL1 / V288) protein is Large ribosomal subunit protein bL27.